Consider the following 183-residue polypeptide: Large ribosomal subunit protein uL5 (183 aa).

The protein belongs to the universal ribosomal protein uL5 family. As to quaternary structure, part of the 50S ribosomal subunit; part of the 5S rRNA/L5/L18/L25 subcomplex. Contacts the 5S rRNA and the P site tRNA. Forms a bridge to the 30S subunit in the 70S ribosome.

In terms of biological role, this is one of the proteins that bind and probably mediate the attachment of the 5S RNA into the large ribosomal subunit, where it forms part of the central protuberance. In the 70S ribosome it contacts protein S13 of the 30S subunit (bridge B1b), connecting the 2 subunits; this bridge is implicated in subunit movement. Contacts the P site tRNA; the 5S rRNA and some of its associated proteins might help stabilize positioning of ribosome-bound tRNAs. This is Large ribosomal subunit protein uL5 from Tropheryma whipplei (strain TW08/27) (Whipple's bacillus).